A 319-amino-acid chain; its full sequence is Inositol-tetrakisphosphate 1-kinase (319 aa).

Positions 17 and 57 each coordinate 1D-myo-inositol 1,3,4,6-tetrakisphosphate. Residue Lys17 coordinates 1D-myo-inositol 1,3,4-trisphosphate. Arg94 and Lys136 together coordinate ADP. Residues Arg94 and Lys136 each coordinate ATP. The ATP-grasp domain maps to 98–317 (NALLIKNNIP…KVALCYTEVA (220 aa)). 3 residues coordinate 1D-myo-inositol 1,3,4,6-tetrakisphosphate: Gln141, Gly142, and His147. Positions 141, 142, and 147 each coordinate 1D-myo-inositol 1,3,4-trisphosphate. 5 residues coordinate ADP: His147, Gln168, His169, Tyr170, and Ile171. Positions 147, 168, 169, 170, and 171 each coordinate ATP. Lys179 serves as a coordination point for 1D-myo-inositol 1,3,4,6-tetrakisphosphate. Positions 194 and 210 each coordinate ADP. Ser194 serves as a coordination point for ATP. Asp275 is a binding site for Mg(2+). ADP-binding residues include Val288 and Asp289. 3 residues coordinate ATP: Val288, Asp289, and Asn291. 1D-myo-inositol 1,3,4,6-tetrakisphosphate contacts are provided by Asp289, Asn291, and Ser295. Residues Asp289 and Asn291 each coordinate Mg(2+). 1D-myo-inositol 1,3,4-trisphosphate is bound by residues Asn291 and Ser295.

It belongs to the ITPK1 family. In terms of assembly, monomer. Mg(2+) serves as cofactor.

It catalyses the reaction 1D-myo-inositol 3,4,5,6-tetrakisphosphate + ATP = 1D-myo-inositol 1,3,4,5,6-pentakisphosphate + ADP + H(+). The enzyme catalyses 1D-myo-inositol 1,3,4-trisphosphate + ATP = 1D-myo-inositol 1,3,4,5-tetrakisphosphate + ADP + H(+). The catalysed reaction is 1D-myo-inositol 1,3,4-trisphosphate + ATP = 1D-myo-inositol 1,3,4,6-tetrakisphosphate + ADP + H(+). Kinase that can phosphorylate various inositol polyphosphate such as Ins(3,4,5,6)P4 or Ins(1,3,4)P3. Phosphorylates Ins(3,4,5,6)P4 at position 1 to form Ins(1,3,4,5,6)P5. This reaction is thought to have regulatory importance, since Ins(3,4,5,6)P4 is an inhibitor of plasma membrane Ca(2+)-activated Cl(-) channels, while Ins(1,3,4,5,6)P5 is not. Also phosphorylates Ins(1,3,4)P3 on O-5 and O-6 to form Ins(1,3,4,6)P4, an essential molecule in the hexakisphosphate (InsP6) pathway. May also act as an isomerase that interconverts the inositol tetrakisphosphate isomers Ins(1,3,4,5)P4 and Ins(1,3,4,6)P4 in the presence of ADP and magnesium. This Entamoeba histolytica (strain ATCC 30459 / HM-1:IMSS / ABRM) protein is Inositol-tetrakisphosphate 1-kinase (ITPK1).